The sequence spans 584 residues: Outer membrane transporter CdiB-2 (584 aa).

Positions 1–20 are cleaved as a signal peptide; sequence MATRFAILPVTALITLTAQA. The segment covering 24-44 has biased composition (low complexity); sequence PTPNDQAAAARANAEQNQQAQ. The tract at residues 24–72 is disordered; the sequence is PTPNDQAAAARANAEQNQQAQQRRDAQQRDATVQAPGVRSDVPRPEAYP. Residues 98-171 enclose the POTRA domain; sequence SKAQGASALP…GALKLALIPG (74 aa).

This sequence belongs to the TPS (TC 1.B.20) family.

It is found in the cell outer membrane. In terms of biological role, potential outer membrane protein component of a toxin-immunity protein module, which functions as a cellular contact-dependent growth inhibition (CDI) system. CDI modules allow bacteria to communicate with and inhibit the growth of closely related neighboring bacteria in a contact-dependent fashion. This protein may be required for secretion and assembly of the CdiA toxin protein. Expression of this cdiAIB locus in B.thailandensis confers protection against other bacteria carrying the locus; growth inhibition requires cellular contact. Its function is as follows. Probable member of a two partner secretion pathway (TPS) in which it mediates the secretion of CdiA2. In Burkholderia pseudomallei (strain 1026b), this protein is Outer membrane transporter CdiB-2 (cdiB2).